Reading from the N-terminus, the 724-residue chain is Probable methyltransferase PMT28 (724 aa).

The Cytoplasmic segment spans residues 1-22 (MMERKREMGIAYFARRIKQPRG). Residues 23-43 (IWVKMTFIVVLGLCFVFFWSF) traverse the membrane as a helical; Signal-anchor for type II membrane protein segment. Topologically, residues 44–724 (LSSSASTFNV…LCAQKTLWRP (681 aa)) are lumenal. The tract at residues 63 to 211 (EPVSSRTKSA…ISKKRKRKGP (149 aa)) is disordered. A compositionally biased stretch (basic and acidic residues) spans 71–98 (SAHEVSESSKLHERGKVESGSKSKEGKK). The span at 107-125 (HETKKKKEHAVSHPHKKKD) shows a compositional bias: basic residues. Positions 126-140 (VPKPVVEEVVVKEDQ) are enriched in basic and acidic residues. A compositionally biased stretch (acidic residues) spans 141-173 (EHEEAESDDSDQSNKEDGEEGTESDGNEGESDG). 3 N-linked (GlcNAc...) asparagine glycosylation sites follow: N305, N316, and N568.

This sequence belongs to the methyltransferase superfamily.

The protein resides in the golgi apparatus membrane. The chain is Probable methyltransferase PMT28 from Arabidopsis thaliana (Mouse-ear cress).